Here is a 137-residue protein sequence, read N- to C-terminus: ATP synthase epsilon chain (137 aa).

It belongs to the ATPase epsilon chain family. As to quaternary structure, F-type ATPases have 2 components, CF(1) - the catalytic core - and CF(0) - the membrane proton channel. CF(1) has five subunits: alpha(3), beta(3), gamma(1), delta(1), epsilon(1). CF(0) has three main subunits: a, b and c.

Its subcellular location is the cellular thylakoid membrane. Its function is as follows. Produces ATP from ADP in the presence of a proton gradient across the membrane. This Trichormus variabilis (strain ATCC 29413 / PCC 7937) (Anabaena variabilis) protein is ATP synthase epsilon chain.